The primary structure comprises 217 residues: ATP phosphoribosyltransferase (217 aa).

It belongs to the ATP phosphoribosyltransferase family. Short subfamily. Heteromultimer composed of HisG and HisZ subunits.

The protein resides in the cytoplasm. It carries out the reaction 1-(5-phospho-beta-D-ribosyl)-ATP + diphosphate = 5-phospho-alpha-D-ribose 1-diphosphate + ATP. It participates in amino-acid biosynthesis; L-histidine biosynthesis; L-histidine from 5-phospho-alpha-D-ribose 1-diphosphate: step 1/9. Its function is as follows. Catalyzes the condensation of ATP and 5-phosphoribose 1-diphosphate to form N'-(5'-phosphoribosyl)-ATP (PR-ATP). Has a crucial role in the pathway because the rate of histidine biosynthesis seems to be controlled primarily by regulation of HisG enzymatic activity. In Burkholderia multivorans (strain ATCC 17616 / 249), this protein is ATP phosphoribosyltransferase.